A 329-amino-acid polypeptide reads, in one-letter code: Ubiquitin carboxyl-terminal hydrolase isozyme L5 (329 aa).

One can recognise a UCH catalytic domain in the interval 7–225 (EWCLMESDPG…IRFNLMAIVS (219 aa)). N6-succinyllysine is present on Lys-47. Cys-88 functions as the Nucleophile in the catalytic mechanism. Lys-158 carries the post-translational modification N6-acetyllysine. Catalysis depends on His-164, which acts as the Proton donor. The residue at position 289 (Lys-289) is an N6-succinyllysine. Residues 291-319 (NYLPFIMELLKTLAEHQQLIPLVEKAKEK) enclose the ULD domain. An interaction with ADRM1 region spans residues 313–329 (VEKAKEKQNAKKAQETK).

Belongs to the peptidase C12 family. Component of the 19S (PA700) regulatory complex of the 26S proteasome. Interacts with ADRM1 and NFRKB. Component of the INO80 complex; specifically part of a complex module associated with N-terminus of INO80.

The protein resides in the cytoplasm. It is found in the nucleus. It catalyses the reaction Thiol-dependent hydrolysis of ester, thioester, amide, peptide and isopeptide bonds formed by the C-terminal Gly of ubiquitin (a 76-residue protein attached to proteins as an intracellular targeting signal).. Activated by ADRM1. Inhibited by interaction with NFRKB. Its function is as follows. Protease that specifically cleaves 'Lys-48'-linked polyubiquitin chains. Deubiquitinating enzyme associated with the 19S regulatory subunit of the 26S proteasome. Putative regulatory component of the INO80 complex; however is inactive in the INO80 complex and is activated by a transient interaction of the INO80 complex with the proteasome via ADRM1. The polypeptide is Ubiquitin carboxyl-terminal hydrolase isozyme L5 (UCHL5) (Sus scrofa (Pig)).